Reading from the N-terminus, the 123-residue chain is MADLQKIVDDLSSLTVLEAAELAKLLEEKWGVSAAAAVAVAAAPGAAAAAVEEKTEFTVMLAAAGDKKIEVIKEVRAITGLGLKEAKDLVEGAPKPVKEGVNKEEADKLKAQLEKAGAKVELK.

It belongs to the bacterial ribosomal protein bL12 family. As to quaternary structure, homodimer. Part of the ribosomal stalk of the 50S ribosomal subunit. Forms a multimeric L10(L12)X complex, where L10 forms an elongated spine to which 2 to 4 L12 dimers bind in a sequential fashion. Binds GTP-bound translation factors.

Functionally, forms part of the ribosomal stalk which helps the ribosome interact with GTP-bound translation factors. Is thus essential for accurate translation. The chain is Large ribosomal subunit protein bL12 from Rhodopseudomonas palustris (strain HaA2).